The chain runs to 575 residues: Sialate:O-sulfotransferase 1 (575 aa).

The Cytoplasmic portion of the chain corresponds to 1–14; sequence MAKPFFRLQKFLRR. Residues 15–35 traverse the membrane as a helical; Signal-anchor for type II membrane protein segment; sequence TQFLLFFLTAAYLMTGSLLLL. Residues 36–575 lie on the Extracellular side of the membrane; sequence QRVRVALPQG…TGLPREYVPR (540 aa). 2 WSC domains span residues 142–234 and 245–340; these read RGTY…YRVD and TATY…DTRC. 2 N-linked (GlcNAc...) asparagine glycosylation sites follow: asparagine 257 and asparagine 348.

It belongs to the WSCD family.

Its subcellular location is the golgi apparatus membrane. It catalyses the reaction a ganglioside GM1b + 3'-phosphoadenylyl sulfate = an 8-O-sulfo-ganglioside GM1b + adenosine 3',5'-bisphosphate + H(+). Its function is as follows. Sialate:O-sulfotransferase which catalyzes 8-O-sulfation at the Sia-glycan level using 3'-phosphoadenosine 5'-phosphosulfate (PAPS) as a donor, forming 8-O-sulfated Sia (Sia8S)-glycans. Displays selectivity toward glycolipids such as GM1 gangliosides. The protein is Sialate:O-sulfotransferase 1 (WSCD1) of Homo sapiens (Human).